The primary structure comprises 272 residues: Protein FAM210A (272 aa).

One can recognise a DUF1279 domain in the interval 117–229 (DKSISLYQRF…GYMSTPPPVK (113 aa)). A helical membrane pass occupies residues 136-156 (VLIPVHLITSGVWFGTFYYAA). Residues 229 to 271 (KEYLQDRMEETKELITEKMEETKDRLTEKLQETKEKVSFKKKV) are a coiled coil. The tract at residues 246–272 (KMEETKDRLTEKLQETKEKVSFKKKVE) is disordered.

It belongs to the FAM210 family. As to quaternary structure, interacts with ATAD3A.

Its subcellular location is the membrane. It localises to the mitochondrion. The protein localises to the cytoplasm. Its function is as follows. May play a role in the structure and strength of both muscle and bone. The protein is Protein FAM210A (FAM210A) of Homo sapiens (Human).